Consider the following 199-residue polypeptide: Recombination protein RecR (199 aa).

The C4-type zinc finger occupies 58-73 (CSVCYNLSETELCRIC). The Toprim domain occupies 81-176 (TRLCVVEQPR…EITRLARGIT (96 aa)).

Belongs to the RecR family.

In terms of biological role, may play a role in DNA repair. It seems to be involved in an RecBC-independent recombinational process of DNA repair. It may act with RecF and RecO. The sequence is that of Recombination protein RecR from Rhodopirellula baltica (strain DSM 10527 / NCIMB 13988 / SH1).